A 378-amino-acid chain; its full sequence is Alcohol dehydrogenase 1 (378 aa).

Cys48 serves as a coordination point for Zn(2+). 49–53 (HTDVL) is an NAD(+) binding site. Zn(2+)-binding residues include His69, Cys99, Cys102, Cys105, Cys113, and Cys177. NAD(+) contacts are provided by residues 202–207 (GIGTVG), Asp226, Lys231, 274–276 (TGV), 297–299 (IGA), and 321–323 (TAF).

This sequence belongs to the zinc-containing alcohol dehydrogenase family. Class-IV subfamily. Homodimer. Zn(2+) serves as cofactor. As to expression, present in non-glandular trichome cells.

The protein resides in the nucleus. It is found in the cytoplasm. It localises to the cytosol. The catalysed reaction is (+)-artemisinic alcohol + NAD(+) = (+)-artemisinic aldehyde + NADH + H(+). The protein operates within sesquiterpene biosynthesis. In terms of biological role, involved in the biosynthesis of the antimalarial endoperoxide artemisinin. Catalyzes the conversion of artemisinic alcohol into artemisinic aldehyde. The polypeptide is Alcohol dehydrogenase 1 (Artemisia annua (Sweet wormwood)).